The following is a 173-amino-acid chain: NADH-ubiquinone oxidoreductase chain 6 (173 aa).

A run of 4 helical transmembrane segments spans residues 24-44 (AMGL…GMFV), 47-67 (FWFS…LFIY), 81-101 (MKLF…SFFF), and 142-162 (LITL…VKIT).

Belongs to the complex I subunit 6 family.

Its subcellular location is the mitochondrion membrane. The enzyme catalyses a ubiquinone + NADH + 5 H(+)(in) = a ubiquinol + NAD(+) + 4 H(+)(out). Functionally, core subunit of the mitochondrial membrane respiratory chain NADH dehydrogenase (Complex I) that is believed to belong to the minimal assembly required for catalysis. Complex I functions in the transfer of electrons from NADH to the respiratory chain. The immediate electron acceptor for the enzyme is believed to be ubiquinone. The polypeptide is NADH-ubiquinone oxidoreductase chain 6 (Aedes aegypti (Yellowfever mosquito)).